The sequence spans 69 residues: Antimicrobial peptide Eval36 (69 aa).

The N-terminal stretch at 1-23 (MKAQFAILVISMMLLQLIVQTES) is a signal peptide. Position 37 is a leucine amide (Leu-37). Residues 38–69 (GKRGLRNLDDFQDFLDSDTSDADLRMLRDMFR) constitute a propeptide that is removed on maturation.

The protein belongs to the non-disulfide-bridged peptide (NDBP) superfamily. Short antimicrobial peptide (group 4) family. Expressed by the venom gland.

Its subcellular location is the secreted. In terms of biological role, probable antimicrobial peptide. Shows low inhibitory activity against herpes simplex virus type 1 (HSV-1). This Euscorpiops validus (Scorpion) protein is Antimicrobial peptide Eval36.